We begin with the raw amino-acid sequence, 113 residues long: TYRO protein tyrosine kinase-binding protein (113 aa).

The first 27 residues, Met-1 to Ala-27, serve as a signal peptide directing secretion. The Extracellular portion of the chain corresponds to Gln-28–Pro-40. Residues Gly-41–Val-61 traverse the membrane as a helical segment. Position 50 (Asp-50) interacts with Ca(2+). Residues Tyr-62 to Lys-113 are Cytoplasmic-facing. Residues Ala-75–Lys-113 form a disordered region. Residues Arg-80 to Gln-108 enclose the ITAM domain. Residues Thr-87–Lys-113 are compositionally biased toward polar residues. Residues Tyr-91 and Tyr-102 each carry the phosphotyrosine modification.

This sequence belongs to the TYROBP family. In terms of assembly, homodimer; disulfide-linked. Homotrimer; disulfide-linked. Homotetramer; disulfide-linked. Homotrimers and homotetramers form when low levels of partner receptors are available and is competitive with assembly with interacting receptors. They may represent alternative oligomerization states or may be intermediates in the receptor assembly process. Binding of a metal cation aids in homooligomerization through coordination of the metal ion by the subunits of the oligomer. Interacts with TREM1. Interacts with TREM2. Interacts with CLECSF5. Interacts with CD300LB and CD300C2. Interacts with CD300E. Interacts (via ITAM domain) with SYK (via SH2 domains); activates SYK mediating neutrophils and macrophages integrin-mediated activation. Interacts with KLRC2. Interacts with CD300H. Interacts with KLRD1. Following ligand binding by associated receptors, tyrosine phosphorylated in the ITAM domain which leads to activation of additional tyrosine kinases and subsequent cell activation.

It is found in the cell membrane. Its function is as follows. Adapter protein which non-covalently associates with activating receptors found on the surface of a variety of immune cells to mediate signaling and cell activation following ligand binding by the receptors. TYROBP is tyrosine-phosphorylated in the ITAM domain following ligand binding by the associated receptors which leads to activation of additional tyrosine kinases and subsequent cell activation. Also has an inhibitory role in some cells. Non-covalently associates with activating receptors of the CD300 family to mediate cell activation. Also mediates cell activation through association with activating receptors of the CD200R family. Required for neutrophil activation mediated by integrin. Required for the activation of myeloid cells mediated by the CLEC5A/MDL1 receptor. Associates with natural killer (NK) cell receptors such as the KLRD1/KLRC2 heterodimer to mediate NK cell activation. Associates with TREM1 to mediate activation of neutrophils and monocytes. Associates with TREM2 on monocyte-derived dendritic cells to mediate up-regulation of chemokine receptor CCR7 and dendritic cell maturation and survival. Association with TREM2 mediates cytokine-induced formation of multinucleated giant cells which are formed by the fusion of macrophages. Stabilizes the TREM2 C-terminal fragment (TREM2-CTF) produced by TREM2 ectodomain shedding which suppresses the release of pro-inflammatory cytokines. In microglia, required with TREM2 for phagocytosis of apoptotic neurons. Required with ITGAM/CD11B in microglia to control production of microglial superoxide ions which promote the neuronal apoptosis that occurs during brain development. Promotes pro-inflammatory responses in microglia following nerve injury which accelerates degeneration of injured neurons. Positively regulates the expression of the IRAK3/IRAK-M kinase and IL10 production by liver dendritic cells and inhibits their T cell allosimulatory ability. Negatively regulates B cell proliferation. Required for CSF1-mediated osteoclast cytoskeletal organization. Positively regulates multinucleation during osteoclast development. The protein is TYRO protein tyrosine kinase-binding protein of Macaca mulatta (Rhesus macaque).